We begin with the raw amino-acid sequence, 290 residues long: Ribosomal RNA small subunit methyltransferase A (290 aa).

S-adenosyl-L-methionine contacts are provided by Asn27, Leu29, Gly54, Glu75, Asp100, and Asn125.

This sequence belongs to the class I-like SAM-binding methyltransferase superfamily. rRNA adenine N(6)-methyltransferase family. RsmA subfamily.

It is found in the cytoplasm. The enzyme catalyses adenosine(1518)/adenosine(1519) in 16S rRNA + 4 S-adenosyl-L-methionine = N(6)-dimethyladenosine(1518)/N(6)-dimethyladenosine(1519) in 16S rRNA + 4 S-adenosyl-L-homocysteine + 4 H(+). In terms of biological role, specifically dimethylates two adjacent adenosines (A1518 and A1519) in the loop of a conserved hairpin near the 3'-end of 16S rRNA in the 30S particle. May play a critical role in biogenesis of 30S subunits. The sequence is that of Ribosomal RNA small subunit methyltransferase A from Streptococcus agalactiae serotype V (strain ATCC BAA-611 / 2603 V/R).